We begin with the raw amino-acid sequence, 257 residues long: Transmembrane protein C257L (257 aa).

Helical transmembrane passes span 123–143 (LELL…FTAL) and 163–183 (MMIF…YVLV).

It belongs to the asfivirus C257R family.

The protein resides in the host membrane. The protein localises to the virion. This African swine fever virus (strain Badajoz 1971 Vero-adapted) (Ba71V) protein is Transmembrane protein C257L.